Here is a 584-residue protein sequence, read N- to C-terminus: ATP synthase subunit alpha, mitochondrial (584 aa).

The N-terminal 24 residues, M1–S24, are a transit peptide targeting the mitochondrion. ATP-binding positions include D207–S214 and Q464.

It belongs to the ATPase alpha/beta chains family. As to quaternary structure, F-type ATPases have 2 components, F(1) - the catalytic core - and F(o) - the membrane proton channel. F(1) has five subunits: alpha(3), beta(3), gamma(1), delta(1), epsilon(1), plus the additional subunit P18 (Tb427.05.1710) that is not present in F(1)F(o) ATP synthase from metazoa. Subunit P18 (Tb927.5.1710) interacts with the alpha subunit with a 1:1 stoichiometry; the interaction is direct. Subunit gamma is part of the central stalk. F(o) has three main subunits: a, b and c. The trypanosomal ATPase complex contains additional subunits that are not present in the F(1)F(o) ATP synthase from metazoa.

The protein resides in the mitochondrion. The protein localises to the mitochondrion inner membrane. Functionally, mitochondrial membrane ATP synthase (F(1)F(o) ATP synthase) produces ATP from ADP in the presence of a proton gradient across the membrane which is generated by electron transport complexes of the respiratory chain. F-type ATPases consist of two structural domains, F(1) - containing the extramembraneous catalytic core, and F(o) - containing the membrane proton channel, linked together by a central stalk and a peripheral stalk. During catalysis, ATP synthesis in the catalytic domain of F(1) is coupled via a rotary mechanism of the central stalk subunits to proton translocation. Subunits alpha and beta form the catalytic core in F(1). Rotation of the central stalk against the surrounding alpha(3)beta(3) subunits leads to hydrolysis of ATP in three separate catalytic sites on the beta subunits. Subunit alpha does not bear the catalytic high-affinity ATP-binding sites. Contrary to the procyclic, insect form that requires F(1)F(o) ATP synthase for ATP synthesis, the bloodstream form relies on ATP hydrolysis by F(1)F(o) ATP synthase to maintain its mitochondrial membrane potential. This Trypanosoma brucei brucei protein is ATP synthase subunit alpha, mitochondrial.